Here is a 257-residue protein sequence, read N- to C-terminus: NAD-capped RNA hydrolase NudC (257 aa).

Residues lysine 25 and arginine 69 each contribute to the substrate site. Zn(2+) is bound by residues cysteine 98 and cysteine 101. Residue glutamate 111 coordinates substrate. Positions 116 and 119 each coordinate Zn(2+). Residue tyrosine 124 coordinates substrate. The Nudix hydrolase domain maps to proline 125 to threonine 248. A divalent metal cation contacts are provided by alanine 158, glutamate 174, and glutamate 178. The Nudix box signature appears at glycine 159 to glycine 180. A substrate-binding site is contributed by glutamine 192–serine 199. Glutamate 219 contributes to the a divalent metal cation binding site. A substrate-binding site is contributed by alanine 241.

It belongs to the Nudix hydrolase family. NudC subfamily. As to quaternary structure, homodimer. Requires Mg(2+) as cofactor. The cofactor is Mn(2+). It depends on Zn(2+) as a cofactor.

It catalyses the reaction a 5'-end NAD(+)-phospho-ribonucleoside in mRNA + H2O = a 5'-end phospho-adenosine-phospho-ribonucleoside in mRNA + beta-nicotinamide D-ribonucleotide + 2 H(+). The enzyme catalyses NAD(+) + H2O = beta-nicotinamide D-ribonucleotide + AMP + 2 H(+). It carries out the reaction NADH + H2O = reduced beta-nicotinamide D-ribonucleotide + AMP + 2 H(+). Functionally, mRNA decapping enzyme that specifically removes the nicotinamide adenine dinucleotide (NAD) cap from a subset of mRNAs by hydrolyzing the diphosphate linkage to produce nicotinamide mononucleotide (NMN) and 5' monophosphate mRNA. The NAD-cap is present at the 5'-end of some mRNAs and stabilizes RNA against 5'-processing. Has preference for mRNAs with a 5'-end purine. Catalyzes the hydrolysis of a broad range of dinucleotide pyrophosphates. In Escherichia coli (strain 55989 / EAEC), this protein is NAD-capped RNA hydrolase NudC.